The chain runs to 358 residues: Probable tartrate dehydrogenase/decarboxylase TtuC' (358 aa).

Mn(2+)-binding residues include Asp-222, Asp-246, and Asp-250.

The protein belongs to the isocitrate and isopropylmalate dehydrogenases family. Requires Mg(2+) as cofactor. Mn(2+) serves as cofactor. The cofactor is K(+).

The protein resides in the cytoplasm. The enzyme catalyses tartrate + NAD(+) = 2-hydroxy-3-oxosuccinate + NADH + H(+). The catalysed reaction is (2R,3S)-tartrate + NAD(+) = 2-hydroxy-3-oxosuccinate + NADH + H(+). It catalyses the reaction (2R,3R)-tartrate + NAD(+) = 2-hydroxy-3-oxosuccinate + NADH + H(+). It carries out the reaction (2R,3R)-tartrate + H(+) = (R)-glycerate + CO2. The enzyme catalyses (R)-malate + NAD(+) = pyruvate + CO2 + NADH. It participates in carbohydrate acid metabolism; tartrate degradation; 2-hydroxy-3-oxosuccinate from L-tartrate: step 1/1. The protein operates within carbohydrate acid metabolism; tartrate degradation; 2-hydroxy-3-oxosuccinate from meso-tartrate: step 1/1. Its pathway is carbohydrate acid metabolism; tartrate degradation; D-glycerate from L-tartrate: step 1/1. In terms of biological role, has multiple catalytic activities. Apart from catalyzing the oxidation of (+)-tartrate to oxaloglycolate, also converts meso-tartrate to D-glycerate and catalyzes the oxidative decarboxylation of D-malate to pyruvate. This chain is Probable tartrate dehydrogenase/decarboxylase TtuC' (ttuC'), found in Agrobacterium vitis (Rhizobium vitis).